The chain runs to 571 residues: MRTSQFLLATQKETPSDAVVVSHQLMLRAGMIRKLASGLYTWLPMGLRVLRKVEAIVREEMNAVGALEILMPGIQPAELWQESGRWEQYGPELMRLVDRHNREFCLGPTHEEVITDLARNELNSYKQLPINMYQIQTKFRDEIRPRFGLMRGREFVMKDAYSFHADNASLQVTYDRMHLAYSNVFSRLGLKFRPVEADNGSIGGAGSHEFHVLAESGEDDIVFSNGSDYAANIEKAEAVPREKARAAATEELRLVDTPNAKTIAQLVEGFGLPIEKTVKTLVVHAAEEGKLIALIIRGDHELNEIKASQQELVASPLVMASEAELRDAIGAGAGSLGPLNLPLPCIIDRSVELMSDFAVGANIDDKHYFGVNWERDLPVPTVADLRNVVAGDPSPDGQGTLEIKRGIEVGHIFQLGTKYSEAMKCQVLGENGKPVNLAMGCYGIGVSRVVAAAIEQNSDENGIIWNDTLAPFQIALIPLRYETDAVREATDKLYAELTAAGFEVLLDDRDKKTSPGIKFADMELIGIPHRIVVSDRGLAEGNLEYKSRTESQPQAIAVADVLSFIQGRVKR.

It belongs to the class-II aminoacyl-tRNA synthetase family. ProS type 1 subfamily. Homodimer.

It is found in the cytoplasm. The catalysed reaction is tRNA(Pro) + L-proline + ATP = L-prolyl-tRNA(Pro) + AMP + diphosphate. Catalyzes the attachment of proline to tRNA(Pro) in a two-step reaction: proline is first activated by ATP to form Pro-AMP and then transferred to the acceptor end of tRNA(Pro). As ProRS can inadvertently accommodate and process non-cognate amino acids such as alanine and cysteine, to avoid such errors it has two additional distinct editing activities against alanine. One activity is designated as 'pretransfer' editing and involves the tRNA(Pro)-independent hydrolysis of activated Ala-AMP. The other activity is designated 'posttransfer' editing and involves deacylation of mischarged Ala-tRNA(Pro). The misacylated Cys-tRNA(Pro) is not edited by ProRS. The polypeptide is Proline--tRNA ligase (Pseudomonas syringae pv. tomato (strain ATCC BAA-871 / DC3000)).